A 430-amino-acid chain; its full sequence is MEF2-activating motif and SAP domain-containing transcriptional regulator (430 aa).

The MEF2-binding signature appears at 12 to 28 (IIRSKFRSVLQLRIHRR). 4 disordered regions span residues 84-172 (CWSL…PLPH), 204-239 (KSMLLERMRGGAPPRERPKARREDSAAGAPWPRFRP), 280-301 (VATTAQAPTPAPVPVPSSAPAS), and 330-416 (EDQV…DLSD). The span at 87 to 103 (LKKESPKTSQHWREPKP) shows a compositional bias: basic and acidic residues. Residues 147–170 (QPPPRMKPTPLTPSPPGVPSPSPL) are compositionally biased toward pro residues. An SAP domain is found at 181-215 (LEELTVSELRQQLRLRGLPVSGTKSMLLERMRGGA). A compositionally biased stretch (basic and acidic residues) spans 207–228 (LLERMRGGAPPRERPKARREDS). The tract at residues 224-430 (RREDSAAGAP…RLWDLLEDPW (207 aa)) is transcription activation. Low complexity-rich tracts occupy residues 363-373 (SSVFSSSLPSP) and 393-403 (ALSGGPSLGCG).

In terms of assembly, interacts with MEF2C.

The protein resides in the nucleus. Transcriptional coactivator. Stimulates the transcriptional activity of MEF2C. Stimulates MYOD1 activity in part via MEF2, resulting in an enhancement of skeletal muscle differentiation. The protein is MEF2-activating motif and SAP domain-containing transcriptional regulator (MAMSTR) of Bos taurus (Bovine).